The primary structure comprises 455 residues: Protein chibby homolog 2 (455 aa).

A phosphoserine mark is found at S41, S86, S89, S97, S124, S144, S148, and S150. Positions 160–197 (KRLAKECLLQENKTLREENRALREENRMLRKENKILQV) form a coiled coil. Residues S211 and S225 each carry the phosphoserine modification. Positions 240-266 (GRENSTLQLLREENRALQQLLEQRKAY) form a coiled coil. Residues 267–318 (WAQPDEKAASTEEIKPISSPHEEPHGLLPDPGPGLPSPFEEPKGLPAPPDDS) are disordered. Residues 270–291 (PDEKAASTEEIKPISSPHEEPH) show a composition bias toward basic and acidic residues. A phosphoserine mark is found at S276 and S332. Residues 350–421 (SQSLELLREM…KLKLQQKLVI (72 aa)) adopt a coiled-coil conformation.

The protein belongs to the chibby family. SPERT subfamily. Homodimer. Binds to NEK1.

This chain is Protein chibby homolog 2 (CBY2), found in Bos taurus (Bovine).